The following is a 270-amino-acid chain: MNAFTFPLLLAFCAFAHGAWVLDWEDEFNGGNLADRWNFELGCNGWGNNELQCYTDNRGANARQEDGKLVISAVREWWGDGVNPDKEFTSARMTTKANWLHGKFEMRARLPKGKHLWPAFWMMPQNSEYGGWPRSGEIDITEYRGQRPQQILGTLHFGAAPDNKGDVGTGERDFPIDFSADFHTFGLDWSPDSMQWLLDDQVYHTESLQRNFWDGVYNQNGSPFDKNFFIILNLAVGGNFFGGEPFDPSESDGWAKNTFEVEYVKKWTWN.

Residues 1 to 18 (MNAFTFPLLLAFCAFAHG) form the signal peptide. One can recognise a GH16 domain in the interval 22–270 (LDWEDEFNGG…VEYVKKWTWN (249 aa)). Catalysis depends on Glu137, which acts as the Nucleophile. Catalysis depends on Glu142, which acts as the Proton donor.

The protein belongs to the glycosyl hydrolase 16 family.

It is found in the secreted. It carries out the reaction Hydrolysis of (1-&gt;3)-beta-D-glucosidic linkages in (1-&gt;3)-beta-D-glucans.. Its activity is regulated as follows. Ca(2+) does not affect the enzyme activity nor the thermostability. Other cations, such as Mg(2+), Mn(2+), Cu(2+), Zn(2+), Ag(+) or Hg(2+) do not cause any serious adverse effect on the activity. Also no significant change in the activity in response to the addition of 1 mM EDTA. Its function is as follows. Hydrolyzes laminarin majorily to glucose (G1), laminaribiose (L2), laminaritriose (L3), laminaritetraose (L4) and laminaripentaose (L5). Hydrolyzes laminarioligosaccharides L3, L4, L5 and laminarihexaose (L6) to G1, L2 and L3. Hardly hydrolyzes L2. Does not hydrolyze lichenan, pustulan, carboxymethyl cellulose, locust bean gum or soluble starch. The chain is Glucan endo-1,3-beta-glucosidase from Cryptopygus antarcticus (Antarctic springtail).